The following is a 799-amino-acid chain: Serine/threonine-protein kinase AfsK (799 aa).

A Protein kinase domain is found at 16-271; the sequence is FEVLGRLGAG…QAQLAPHLFG (256 aa). Residues 22–30 and Lys-44 each bind ATP; that span reads LGAGGMGLV. A Phosphoserine; by autocatalysis modification is found at Ser-71. Asp-138 (proton acceptor) is an active-site residue. Thr-168 is modified (phosphothreonine; by autocatalysis). Disordered stretches follow at residues 295-343 and 393-426; these read RRNG…PAPP and LAAS…PAGW. Pro residues-rich tracts occupy residues 325–343 and 411–421; these read HAPP…PAPP and VPAPAPAPPEA.

The protein belongs to the protein kinase superfamily. Ser/Thr protein kinase family. As to quaternary structure, interacts (via the N-terminal kinase domain) with KbpA; the interaction prevents autophosphorylation of AfsK. Autophosphorylated mainly on threonine residues. Some phosphorylation on serine residues. Autophosphorylation on Thr-168 is the major site enhancing kinase activity towards AfsR, and is regulated though interaction with KbpA.

The enzyme catalyses L-seryl-[protein] + ATP = O-phospho-L-seryl-[protein] + ADP + H(+). It carries out the reaction L-threonyl-[protein] + ATP = O-phospho-L-threonyl-[protein] + ADP + H(+). Its function is as follows. Involved in the regulation of secondary metabolism by phosphorylating, on both Ser and Thr, the AfsR global regulatory protein involved in the control of secondary metabolism. The chain is Serine/threonine-protein kinase AfsK (afsK) from Streptomyces coelicolor (strain ATCC BAA-471 / A3(2) / M145).